The following is a 753-amino-acid chain: Replication restart protein PriA (753 aa).

One can recognise a Helicase ATP-binding domain in the interval 228–395 (SLVAEQFQTC…LSKKYTLSVL (168 aa)). 241–248 (GVTGSGKT) serves as a coordination point for ATP. The DEAH box signature appears at 337–340 (DEEH). Zn(2+) is bound by residues Cys-458, Cys-461, Cys-467, Cys-470, Cys-485, Cys-488, Cys-499, and Cys-502. The Helicase C-terminal domain occupies 491–646 (RLSKPITSCP…DFPAFYKEEI (156 aa)).

The protein belongs to the helicase family. PriA subfamily. As to quaternary structure, component of the replication restart primosome. Zn(2+) serves as cofactor.

It carries out the reaction Couples ATP hydrolysis with the unwinding of duplex DNA by translocating in the 3'-5' direction.. The catalysed reaction is ATP + H2O = ADP + phosphate + H(+). Functionally, initiates the restart of stalled replication forks, which reloads the replicative helicase on sites other than the origin of replication. Recognizes and binds to abandoned replication forks and remodels them to uncover a helicase loading site. Promotes assembly of the primosome at these replication forks. This is Replication restart protein PriA from Chlamydia trachomatis serovar D (strain ATCC VR-885 / DSM 19411 / UW-3/Cx).